A 168-amino-acid chain; its full sequence is MTRFIPPATEVLIVADCWQAEAEAEAIVLRAIEAAAAMTDADTADAELAVMLTDDAGVQTLNANWRGIDKPTNVLSFPALQPEGDAPDDAPKMLGDIAIAYQTTRREADDEGKPFDHHLSHLAVHGFLHLVGYDHEKDAEAEAMESLEREILAQLGVPDPYADQDRVN.

Zn(2+) is bound by residues His-125, His-129, and His-135.

It belongs to the endoribonuclease YbeY family. Zn(2+) is required as a cofactor.

The protein localises to the cytoplasm. In terms of biological role, single strand-specific metallo-endoribonuclease involved in late-stage 70S ribosome quality control and in maturation of the 3' terminus of the 16S rRNA. The polypeptide is Endoribonuclease YbeY (Rhodopseudomonas palustris (strain BisB18)).